The sequence spans 516 residues: 7-chloro-L-tryptophan 6-halogenase KtzR (516 aa).

Positions 6, 8, 9, 42, and 43 each coordinate FAD. Lys-71 is a catalytic residue. Val-195 is a binding site for FAD. 2 residues coordinate chloride: Thr-357 and Gly-358. Residue Ile-359 participates in FAD binding.

Belongs to the flavin-dependent halogenase family. Bacterial tryptophan halogenase subfamily.

It catalyses the reaction 7-chloro-L-tryptophan + FADH2 + chloride + O2 = 6,7-dichloro-L-tryptophan + FAD + 2 H2O. In terms of biological role, involved in the biosynthesis of kutznerides, actinomycete-derived antifungal and antimicrobial cyclic hexadepsipeptides. Together with KtzQ, catalyzes the regiospecific dichlorination of L-tryptophan (L-Trp) to produce 6,7-dichloro-L-tryptophan. KtzR catalyzes the chlorination of 7-chloro-L-tryptophan at C6 position to yield 6,7-dichloro-L-tryptophan. Can also use L-Trp as substrate and form 6-chloro-L-tryptophan, but has a 120-fold preference for 7-chloro-L-tryptophan over L-Trp. Cannot use piperazic acid or gamma,delta-dehydropiperazic acid. This Kutzneria sp. (strain 744) protein is 7-chloro-L-tryptophan 6-halogenase KtzR.